The sequence spans 318 residues: Pantothenate kinase (318 aa).

ATP is bound at residue 96–103; it reads GSVAVGKS.

This sequence belongs to the prokaryotic pantothenate kinase family.

The protein localises to the cytoplasm. The enzyme catalyses (R)-pantothenate + ATP = (R)-4'-phosphopantothenate + ADP + H(+). Its pathway is cofactor biosynthesis; coenzyme A biosynthesis; CoA from (R)-pantothenate: step 1/5. This chain is Pantothenate kinase, found in Rhodopseudomonas palustris (strain ATCC BAA-98 / CGA009).